Consider the following 80-residue polypeptide: Cell division protein ZapB (80 aa).

Residues 3–80 (LEILEQLEAK…GLLGKMEEVE (78 aa)) adopt a coiled-coil conformation. The segment at 41 to 62 (LEQANNGRSEVEQEAQKARDEQ) is disordered. A compositionally biased stretch (basic and acidic residues) spans 49-62 (SEVEQEAQKARDEQ).

Belongs to the ZapB family. As to quaternary structure, homodimer. The ends of the coiled-coil dimer bind to each other, forming polymers. Interacts with FtsZ.

It is found in the cytoplasm. Functionally, non-essential, abundant cell division factor that is required for proper Z-ring formation. It is recruited early to the divisome by direct interaction with FtsZ, stimulating Z-ring assembly and thereby promoting cell division earlier in the cell cycle. Its recruitment to the Z-ring requires functional FtsA or ZipA. This Aliivibrio salmonicida (strain LFI1238) (Vibrio salmonicida (strain LFI1238)) protein is Cell division protein ZapB.